We begin with the raw amino-acid sequence, 429 residues long: Trigger factor (429 aa).

A PPIase FKBP-type domain is found at 162 to 247 (DDTVDLAFEG…INAIKKLRQP (86 aa)).

It belongs to the FKBP-type PPIase family. Tig subfamily.

It is found in the cytoplasm. The catalysed reaction is [protein]-peptidylproline (omega=180) = [protein]-peptidylproline (omega=0). Its function is as follows. Involved in protein export. Acts as a chaperone by maintaining the newly synthesized protein in an open conformation. Functions as a peptidyl-prolyl cis-trans isomerase. The protein is Trigger factor of Fusobacterium nucleatum subsp. nucleatum (strain ATCC 25586 / DSM 15643 / BCRC 10681 / CIP 101130 / JCM 8532 / KCTC 2640 / LMG 13131 / VPI 4355).